Consider the following 106-residue polypeptide: UPF0145 protein TM_0763 (106 aa).

It belongs to the UPF0145 family.

The sequence is that of UPF0145 protein TM_0763 from Thermotoga maritima (strain ATCC 43589 / DSM 3109 / JCM 10099 / NBRC 100826 / MSB8).